Reading from the N-terminus, the 406-residue chain is Succinylornithine transaminase/acetylornithine aminotransferase (406 aa).

Pyridoxal 5'-phosphate-binding positions include 108-109 and Phe-141; that span reads GA. Arg-144 provides a ligand contact to N(2)-acetyl-L-ornithine. 226–229 is a pyridoxal 5'-phosphate binding site; the sequence is DEVQ. The residue at position 255 (Lys-255) is an N6-(pyridoxal phosphate)lysine. Thr-283 lines the N(2)-acetyl-L-ornithine pocket. Thr-284 contacts pyridoxal 5'-phosphate.

It belongs to the class-III pyridoxal-phosphate-dependent aminotransferase family. ArgD subfamily. Homodimer. It depends on pyridoxal 5'-phosphate as a cofactor.

The protein resides in the cytoplasm. It carries out the reaction N(2)-succinyl-L-ornithine + 2-oxoglutarate = N-succinyl-L-glutamate 5-semialdehyde + L-glutamate. The enzyme catalyses N(2)-acetyl-L-ornithine + 2-oxoglutarate = N-acetyl-L-glutamate 5-semialdehyde + L-glutamate. The protein operates within amino-acid biosynthesis; L-arginine biosynthesis; N(2)-acetyl-L-ornithine from L-glutamate: step 4/4. It participates in amino-acid degradation; L-arginine degradation via AST pathway; L-glutamate and succinate from L-arginine: step 3/5. Transaminates both N(2)-acetylornithine and N(2)-succinylornithine. The polypeptide is Succinylornithine transaminase/acetylornithine aminotransferase (aruC) (Pseudomonas aeruginosa (strain ATCC 15692 / DSM 22644 / CIP 104116 / JCM 14847 / LMG 12228 / 1C / PRS 101 / PAO1)).